Here is a 317-residue protein sequence, read N- to C-terminus: MVETQMDKLGFLLNHIGKQVTTKVLSNAHITQTMKEIILENHSVDGGAAKNASKGKSSPKEKKHWTEFESWEQLSKSKRSFKEYWTERNEIVNTLLLNWDNVRAAIKKFLNDDREWCGRINMVNGVPEIVEIIPSPYRAGENIYFGSEAMMPAEIYSRVANKPAMFVFHTHPNLGSCCGGMPSICDISTTLRYLLMGWTAGHLIISSNQVGMLTVDKRIIVDLWANENPRWLMAQKILDIFMMLTSRRSLVNPWTLRDLKKILQDYGIEYIIFPSNDFFIYEDARLLMFSKKWTNFFTLHELLNDLETIETKATSST.

Belongs to the asfivirus F317L family.

The protein resides in the virion. This is an uncharacterized protein from African swine fever virus (isolate Tick/South Africa/Pretoriuskop Pr4/1996) (ASFV).